The following is an 84-amino-acid chain: Small ribosomal subunit protein bS20 (84 aa).

The protein belongs to the bacterial ribosomal protein bS20 family.

In terms of biological role, binds directly to 16S ribosomal RNA. The sequence is that of Small ribosomal subunit protein bS20 from Bacteroides thetaiotaomicron (strain ATCC 29148 / DSM 2079 / JCM 5827 / CCUG 10774 / NCTC 10582 / VPI-5482 / E50).